Reading from the N-terminus, the 293-residue chain is tRNA pseudouridine synthase A (293 aa).

The active-site Nucleophile is D60. Y118 contacts substrate.

The protein belongs to the tRNA pseudouridine synthase TruA family. Homodimer.

It carries out the reaction uridine(38/39/40) in tRNA = pseudouridine(38/39/40) in tRNA. Its function is as follows. Formation of pseudouridine at positions 38, 39 and 40 in the anticodon stem and loop of transfer RNAs. In Rippkaea orientalis (strain PCC 8801 / RF-1) (Cyanothece sp. (strain PCC 8801)), this protein is tRNA pseudouridine synthase A.